Here is a 479-residue protein sequence, read N- to C-terminus: ATP synthase subunit beta (479 aa).

An ATP-binding site is contributed by 162 to 169 (GGAGVGKT).

The protein belongs to the ATPase alpha/beta chains family. As to quaternary structure, F-type ATPases have 2 components, CF(1) - the catalytic core - and CF(0) - the membrane proton channel. CF(1) has five subunits: alpha(3), beta(3), gamma(1), delta(1), epsilon(1). CF(0) has three main subunits: a(1), b(2) and c(9-12). The alpha and beta chains form an alternating ring which encloses part of the gamma chain. CF(1) is attached to CF(0) by a central stalk formed by the gamma and epsilon chains, while a peripheral stalk is formed by the delta and b chains.

The protein resides in the cell membrane. The catalysed reaction is ATP + H2O + 4 H(+)(in) = ADP + phosphate + 5 H(+)(out). Functionally, produces ATP from ADP in the presence of a proton gradient across the membrane. The catalytic sites are hosted primarily by the beta subunits. In Mesoplasma florum (strain ATCC 33453 / NBRC 100688 / NCTC 11704 / L1) (Acholeplasma florum), this protein is ATP synthase subunit beta.